Reading from the N-terminus, the 328-residue chain is 4-hydroxy-3-methylbut-2-enyl diphosphate reductase (328 aa).

A [4Fe-4S] cluster-binding site is contributed by C24. The (2E)-4-hydroxy-3-methylbut-2-enyl diphosphate site is built by H55 and H88. Dimethylallyl diphosphate is bound by residues H55 and H88. H55 and H88 together coordinate isopentenyl diphosphate. Residue C110 participates in [4Fe-4S] cluster binding. H138 contacts (2E)-4-hydroxy-3-methylbut-2-enyl diphosphate. Residue H138 coordinates dimethylallyl diphosphate. H138 contacts isopentenyl diphosphate. E140 serves as the catalytic Proton donor. Residue T178 coordinates (2E)-4-hydroxy-3-methylbut-2-enyl diphosphate. [4Fe-4S] cluster is bound at residue C208. (2E)-4-hydroxy-3-methylbut-2-enyl diphosphate-binding residues include S236, S237, N238, and S279. 4 residues coordinate dimethylallyl diphosphate: S236, S237, N238, and S279. The isopentenyl diphosphate site is built by S236, S237, N238, and S279.

This sequence belongs to the IspH family. Requires [4Fe-4S] cluster as cofactor.

The catalysed reaction is isopentenyl diphosphate + 2 oxidized [2Fe-2S]-[ferredoxin] + H2O = (2E)-4-hydroxy-3-methylbut-2-enyl diphosphate + 2 reduced [2Fe-2S]-[ferredoxin] + 2 H(+). The enzyme catalyses dimethylallyl diphosphate + 2 oxidized [2Fe-2S]-[ferredoxin] + H2O = (2E)-4-hydroxy-3-methylbut-2-enyl diphosphate + 2 reduced [2Fe-2S]-[ferredoxin] + 2 H(+). The protein operates within isoprenoid biosynthesis; dimethylallyl diphosphate biosynthesis; dimethylallyl diphosphate from (2E)-4-hydroxy-3-methylbutenyl diphosphate: step 1/1. Its pathway is isoprenoid biosynthesis; isopentenyl diphosphate biosynthesis via DXP pathway; isopentenyl diphosphate from 1-deoxy-D-xylulose 5-phosphate: step 6/6. In terms of biological role, catalyzes the conversion of 1-hydroxy-2-methyl-2-(E)-butenyl 4-diphosphate (HMBPP) into a mixture of isopentenyl diphosphate (IPP) and dimethylallyl diphosphate (DMAPP). Acts in the terminal step of the DOXP/MEP pathway for isoprenoid precursor biosynthesis. The protein is 4-hydroxy-3-methylbut-2-enyl diphosphate reductase of Ehrlichia ruminantium (strain Welgevonden).